Reading from the N-terminus, the 407-residue chain is Cathepsin D (407 aa).

A signal peptide spans 1–20 (MQTPGVLLLILGLLDASSSA). Residues 21 to 64 (LIRIPLRKFTSIRRTMTEVGGSVEDLILKGPITKYSMQSSPRTK) constitute a propeptide, activation peptide. The Peptidase A1 domain occupies 79 to 402 (YYGEIGIGTP…DREYNRVGFA (324 aa)). 2 disulfide bridges follow: C91/C160 and C110/C117. D97 is a catalytic residue. N-linked (GlcNAc...) asparagine glycans are attached at residues N134 and N258. C281 and C285 are disulfide-bonded. D290 is an active-site residue. A disulfide bridge links C324 with C361.

The protein belongs to the peptidase A1 family. As to quaternary structure, occurs as a mixture of both a single chain form and two types of two chain (light and heavy) forms. Interacts with ADAM30; this leads to activation of CTSD. N- and O-glycosylated. Post-translationally, undergoes proteolytic cleavage and activation by ADAM30.

The protein resides in the lysosome. The protein localises to the melanosome. Its subcellular location is the secreted. It localises to the extracellular space. The catalysed reaction is Specificity similar to, but narrower than, that of pepsin A. Does not cleave the 4-Gln-|-His-5 bond in B chain of insulin.. Its function is as follows. Acid protease active in intracellular protein breakdown. Plays a role in APP processing following cleavage and activation by ADAM30 which leads to APP degradation. The protein is Cathepsin D (Ctsd) of Rattus norvegicus (Rat).